The sequence spans 439 residues: Ribosomal protein uS12 methylthiotransferase RimO (439 aa).

In terms of domain architecture, MTTase N-terminal spans 3 to 113; that stretch reads HKVGFVSLGC…VVNAVHQHLP (111 aa). Residues Cys-12, Cys-48, Cys-77, Cys-144, Cys-148, and Cys-151 each contribute to the [4Fe-4S] cluster site. Residues 130-367 enclose the Radical SAM core domain; it reads LTPRHYAYLK…MQVQAEISRN (238 aa). The 67-residue stretch at 370-436 folds into the TRAM domain; sequence KNKIGSTQTV…DYDLYGDLEY (67 aa).

Belongs to the methylthiotransferase family. RimO subfamily. The cofactor is [4Fe-4S] cluster.

It localises to the cytoplasm. It carries out the reaction L-aspartate(89)-[ribosomal protein uS12]-hydrogen + (sulfur carrier)-SH + AH2 + 2 S-adenosyl-L-methionine = 3-methylsulfanyl-L-aspartate(89)-[ribosomal protein uS12]-hydrogen + (sulfur carrier)-H + 5'-deoxyadenosine + L-methionine + A + S-adenosyl-L-homocysteine + 2 H(+). Its function is as follows. Catalyzes the methylthiolation of an aspartic acid residue of ribosomal protein uS12. This Legionella pneumophila (strain Corby) protein is Ribosomal protein uS12 methylthiotransferase RimO.